Consider the following 460-residue polypeptide: Serine/threonine-protein kinase UL13 (460 aa).

Positions 1 to 37 (MATRGRPGAKQVADHSVSDGGEQRRIPQKPPGPERCD) are disordered. Positions 12–25 (VADHSVSDGGEQRR) are enriched in basic and acidic residues. One can recognise a Protein kinase domain in the interval 95–460 (LEPYRFLGRG…DVRRTVSALA (366 aa)). ATP contacts are provided by residues 101–109 (LGRGGYGSV) and lysine 120. Residue aspartate 219 is the Proton acceptor of the active site.

This sequence belongs to the protein kinase superfamily. Ser/Thr protein kinase family. In terms of processing, autophosphorylated.

It is found in the virion tegument. The protein localises to the host nucleus. It carries out the reaction L-seryl-[protein] + ATP = O-phospho-L-seryl-[protein] + ADP + H(+). The catalysed reaction is L-threonyl-[protein] + ATP = O-phospho-L-threonyl-[protein] + ADP + H(+). Functionally, multifunctional serine/threonine kinase that plays a role in several processes including egress of virus particles from the nucleus, modulation of the actin cytoskeleton and regulation of viral and cellular gene expression. Regulates the nuclear localization of viral envelopment factors UL34 and UL31 homologs, by phosphorylating the US3 kinase homolog, indicating a role in nuclear egress. Disrupts host nuclear lamins, including LMNA and LMNB1. Phosphorylates the viral Fc receptor composed of glycoproteins E (gE) and I (gI). Phosphorylation of glycoprotein E (gE) by UL13 homolog alters its subcellular localization, from the host early endosome to the plasma membrane. Participates in the transcriptional regulation of cellular and viral mRNAs mainly by phosphorylating the viral transcriptional regulator ICP22 homolog. The polypeptide is Serine/threonine-protein kinase UL13 (UL13) (Amazona oratrix (yellow-headed parrot)).